Here is a 191-residue protein sequence, read N- to C-terminus: dCTP deaminase (191 aa).

DCTP-binding positions include Lys-112 to Arg-117, Thr-136 to Glu-138, Gln-157, Tyr-173, and Gln-183. Glu-138 functions as the Proton donor/acceptor in the catalytic mechanism.

Belongs to the dCTP deaminase family. Homotrimer.

The catalysed reaction is dCTP + H2O + H(+) = dUTP + NH4(+). The protein operates within pyrimidine metabolism; dUMP biosynthesis; dUMP from dCTP (dUTP route): step 1/2. Functionally, catalyzes the deamination of dCTP to dUTP. The chain is dCTP deaminase from Psychrobacter arcticus (strain DSM 17307 / VKM B-2377 / 273-4).